The sequence spans 282 residues: NADPH-dependent 7-cyano-7-deazaguanine reductase (282 aa).

88-90 is a substrate binding site; that stretch reads IES. 90 to 91 provides a ligand contact to NADPH; sequence SK. The Thioimide intermediate role is filled by Cys190. The Proton donor role is filled by Asp197. A substrate-binding site is contributed by 229-230; sequence HE. 258-259 contacts NADPH; it reads RG.

This sequence belongs to the GTP cyclohydrolase I family. QueF type 2 subfamily. Homodimer.

It is found in the cytoplasm. The catalysed reaction is 7-aminomethyl-7-carbaguanine + 2 NADP(+) = 7-cyano-7-deazaguanine + 2 NADPH + 3 H(+). The protein operates within tRNA modification; tRNA-queuosine biosynthesis. In terms of biological role, catalyzes the NADPH-dependent reduction of 7-cyano-7-deazaguanine (preQ0) to 7-aminomethyl-7-deazaguanine (preQ1). This chain is NADPH-dependent 7-cyano-7-deazaguanine reductase, found in Salmonella heidelberg (strain SL476).